Reading from the N-terminus, the 319-residue chain is Transcription factor bHLH111 (319 aa).

Residues 1–23 (MDHHHHIASRNSSTTSELPSFEP) form a disordered region. Polar residues predominate over residues 9–18 (SRNSSTTSEL). The 50-residue stretch at 195–244 (SEGSTLSPEKELPKAKLRDKITTLQQIVSPFGKTDTASVLQEAITYINFY) folds into the bHLH domain.

Homodimer.

The protein resides in the nucleus. The sequence is that of Transcription factor bHLH111 (BHLH111) from Arabidopsis thaliana (Mouse-ear cress).